A 154-amino-acid polypeptide reads, in one-letter code: Ribosomal RNA large subunit methyltransferase H (154 aa).

S-adenosyl-L-methionine-binding positions include Leu-76, Gly-103, and Leu-122 to Leu-127.

The protein belongs to the RNA methyltransferase RlmH family. In terms of assembly, homodimer.

Its subcellular location is the cytoplasm. The catalysed reaction is pseudouridine(1915) in 23S rRNA + S-adenosyl-L-methionine = N(3)-methylpseudouridine(1915) in 23S rRNA + S-adenosyl-L-homocysteine + H(+). In terms of biological role, specifically methylates the pseudouridine at position 1915 (m3Psi1915) in 23S rRNA. In Wolinella succinogenes (strain ATCC 29543 / DSM 1740 / CCUG 13145 / JCM 31913 / LMG 7466 / NCTC 11488 / FDC 602W) (Vibrio succinogenes), this protein is Ribosomal RNA large subunit methyltransferase H.